The following is a 439-amino-acid chain: C4-dicarboxylate transport protein 1 (439 aa).

Transmembrane regions (helical) follow at residues 18 to 38 (VLYIQVLVAIVLGVIVGWLWP), 56 to 76 (LIKMVIAPVIFCTVVSGIAHV), 91 to 111 (IYFEIVSTFALALGLIVANVI), 157 to 177 (GEILQVLLFSILFGIALMSLG), 193 to 213 (AIFGVIAIVVKAAPIGAFGAM), and 231 to 251 (LIATFYLTALAFVIIVLGIIA).

It belongs to the dicarboxylate/amino acid:cation symporter (DAACS) (TC 2.A.23) family.

Its subcellular location is the cell inner membrane. Its function is as follows. Responsible for the transport of dicarboxylates such as succinate, fumarate, and malate from the periplasm across the membrane. This is C4-dicarboxylate transport protein 1 from Bradyrhizobium sp. (strain ORS 278).